The following is a 463-amino-acid chain: Glutamate--tRNA ligase 1 (463 aa).

The 'HIGH' region motif lies at 10–20 (PSPTGYLHIGG). The 'KMSKS' region signature appears at 238-242 (KLSKR). Lysine 241 is an ATP binding site.

This sequence belongs to the class-I aminoacyl-tRNA synthetase family. Glutamate--tRNA ligase type 1 subfamily. In terms of assembly, monomer.

The protein localises to the cytoplasm. It catalyses the reaction tRNA(Glu) + L-glutamate + ATP = L-glutamyl-tRNA(Glu) + AMP + diphosphate. Its function is as follows. Catalyzes the attachment of glutamate to tRNA(Glu) in a two-step reaction: glutamate is first activated by ATP to form Glu-AMP and then transferred to the acceptor end of tRNA(Glu). The polypeptide is Glutamate--tRNA ligase 1 (Helicobacter pylori (strain ATCC 700392 / 26695) (Campylobacter pylori)).